We begin with the raw amino-acid sequence, 286 residues long: 4-hydroxybenzoate octaprenyltransferase (286 aa).

A run of 7 helical transmembrane segments spans residues 21-40 (GTLL…AGGM), 96-116 (LFVI…GLVV), 142-162 (FLGV…TGEV), 167-187 (WWLF…YAMV), 210-230 (QIIG…GWSA), 235-255 (LYGL…MLIF), and 266-286 (FLNN…DYLF).

Belongs to the UbiA prenyltransferase family. Requires Mg(2+) as cofactor.

Its subcellular location is the cell inner membrane. It carries out the reaction all-trans-octaprenyl diphosphate + 4-hydroxybenzoate = 4-hydroxy-3-(all-trans-octaprenyl)benzoate + diphosphate. It participates in cofactor biosynthesis; ubiquinone biosynthesis. Functionally, catalyzes the prenylation of para-hydroxybenzoate (PHB) with an all-trans polyprenyl group. Mediates the second step in the final reaction sequence of ubiquinone-8 (UQ-8) biosynthesis, which is the condensation of the polyisoprenoid side chain with PHB, generating the first membrane-bound Q intermediate 3-octaprenyl-4-hydroxybenzoate. The chain is 4-hydroxybenzoate octaprenyltransferase from Shewanella sp. (strain ANA-3).